A 355-amino-acid polypeptide reads, in one-letter code: Uroporphyrinogen decarboxylase (355 aa).

Substrate is bound by residues 27–31, Asp-77, Tyr-154, Thr-209, and His-327; that span reads RQAGR.

This sequence belongs to the uroporphyrinogen decarboxylase family. As to quaternary structure, homodimer.

It localises to the cytoplasm. The catalysed reaction is uroporphyrinogen III + 4 H(+) = coproporphyrinogen III + 4 CO2. It functions in the pathway porphyrin-containing compound metabolism; protoporphyrin-IX biosynthesis; coproporphyrinogen-III from 5-aminolevulinate: step 4/4. Catalyzes the decarboxylation of four acetate groups of uroporphyrinogen-III to yield coproporphyrinogen-III. The chain is Uroporphyrinogen decarboxylase from Pseudoalteromonas atlantica (strain T6c / ATCC BAA-1087).